The chain runs to 349 residues: Green-sensitive opsin-1 (349 aa).

Over 1–36 (MNGTEGKNFYVPMSNRTGLVRSPFEYPQYYLAEPWQ) the chain is Extracellular. Residues asparagine 2 and asparagine 15 are each glycosylated (N-linked (GlcNAc...) asparagine). Residues 37–61 (FKILALYLFFLMSMGLPINGLTLVV) traverse the membrane as a helical segment. The Cytoplasmic portion of the chain corresponds to 62 to 73 (TAQHKKLRQPLN). Residues 74–99 (FILVNLAVAGTIMVCFGFTVTFYTAI) traverse the membrane as a helical segment. Over 100-113 (NGYFVLGPTGCAVE) the chain is Extracellular. Cysteine 110 and cysteine 187 are disulfide-bonded. A helical membrane pass occupies residues 114–133 (GFMATLGGEVALWSLVVLAI). Residues 134-152 (ERYIVVCKPMGSFKFSSSH) are Cytoplasmic-facing. A helical transmembrane segment spans residues 153 to 176 (AFAGIAFTWVMALACAAPPLFGWS). At 177–202 (RYIPEGMQCSCGPDYYTLNPDYNNES) the chain is on the extracellular side. Residues 203–230 (YVIYMFVCHFILPVAVIFFTYGRLVCTV) form a helical membrane-spanning segment. The Cytoplasmic portion of the chain corresponds to 231-252 (KAAAAQQQDSASTQKAEREVTK). The helical transmembrane segment at 253–276 (MVILMVFGFLIAWTPYATVAAWIF) threads the bilayer. Over 277–284 (FNKGADFS) the chain is Extracellular. The chain crosses the membrane as a helical span at residues 285–309 (AKFMAIPAFFSKSSALYNPVIYVLL). Position 296 is an N6-(retinylidene)lysine (lysine 296). The Cytoplasmic portion of the chain corresponds to 310-349 (NKQFRNCMLTTIFCGKNPLGDDESSTVSTSKTEVSSVSPA). The tract at residues 329-349 (GDDESSTVSTSKTEVSSVSPA) is disordered. Over residues 334–349 (STVSTSKTEVSSVSPA) the composition is skewed to low complexity.

Belongs to the G-protein coupled receptor 1 family. Opsin subfamily. Post-translationally, phosphorylated on some or all of the serine and threonine residues present in the C-terminal region. The color pigments are found in the cone photoreceptor cells.

It is found in the membrane. Visual pigments are the light-absorbing molecules that mediate vision. They consist of an apoprotein, opsin, covalently linked to cis-retinal. This is Green-sensitive opsin-1 from Carassius auratus (Goldfish).